Reading from the N-terminus, the 347-residue chain is 3',5'-bisphosphate nucleotidase 2 (347 aa).

D46 acts as the Proton acceptor in catalysis. Mg(2+) is bound by residues E71, D134, I136, and D137. The active-site Proton acceptor is T139. T139, S255, K258, R272, and D284 together coordinate adenosine 3',5'-bisphosphate. The AMP site is built by S255, K258, R272, and D284. D284 is a Mg(2+) binding site.

The protein belongs to the inositol monophosphatase superfamily. Mg(2+) is required as a cofactor. As to expression, very low expression in roots, leaves, stems, flowers and siliques.

It carries out the reaction adenosine 3',5'-bisphosphate + H2O = AMP + phosphate. The catalysed reaction is 3'-phosphoadenylyl sulfate + H2O = adenosine 5'-phosphosulfate + phosphate. It catalyses the reaction 1D-myo-inositol 1,4-bisphosphate + H2O = 1D-myo-inositol 4-phosphate + phosphate. It participates in signal transduction; phosphatidylinositol signaling pathway. Inhibited by Li(+) (IC(50)=10 mM), Na(+) (IC(50)=200 mM) and Ca(2+) (IC(50)=0.03 mM). Its function is as follows. Phosphatase that converts adenosine 3'-phosphate 5'-phosphosulfate (PAPS) to adenosine 5'-phosphosulfate (APS) and 3'-phosphoadenosine 5'-phosphate (3'-PAP) to AMP. May regulate the flux of sulfur in the sulfur-activation pathway by converting PAPS to APS. Prevents both the toxicity of PAP on RNA processing enzymes as well as the product inhibition by PAP of sulfate conjugation. Is also able to hydrolyze inositol 1,4-bisphosphate. This chain is 3',5'-bisphosphate nucleotidase 2, found in Arabidopsis thaliana (Mouse-ear cress).